Reading from the N-terminus, the 356-residue chain is Kelch domain-containing protein VC_1773 (356 aa).

Kelch repeat units follow at residues 72 to 125 (KLYV…SLSP), 163 to 210 (TIFM…HKNN), 288 to 331 (NLYA…ASNG), and 333 to 355 (AMYVLGGENSNGDAMTRCLSLLM).

This is Kelch domain-containing protein VC_1773 from Vibrio cholerae serotype O1 (strain ATCC 39315 / El Tor Inaba N16961).